Consider the following 199-residue polypeptide: NADH-quinone oxidoreductase subunit C (199 aa).

Belongs to the complex I 30 kDa subunit family. NDH-1 is composed of 14 different subunits. Subunits NuoB, C, D, E, F, and G constitute the peripheral sector of the complex.

It localises to the cell inner membrane. It carries out the reaction a quinone + NADH + 5 H(+)(in) = a quinol + NAD(+) + 4 H(+)(out). In terms of biological role, NDH-1 shuttles electrons from NADH, via FMN and iron-sulfur (Fe-S) centers, to quinones in the respiratory chain. The immediate electron acceptor for the enzyme in this species is believed to be ubiquinone. Couples the redox reaction to proton translocation (for every two electrons transferred, four hydrogen ions are translocated across the cytoplasmic membrane), and thus conserves the redox energy in a proton gradient. The chain is NADH-quinone oxidoreductase subunit C from Rhodobacter capsulatus (Rhodopseudomonas capsulata).